Reading from the N-terminus, the 1025-residue chain is Dihydropyrimidine dehydrogenase [NADP(+)] (1025 aa).

The propeptide occupies 1-3; the sequence is MAP. Residues 69 to 100 enclose the 4Fe-4S ferredoxin-type 1 domain; that stretch reads ERGALREAMRCLKCADAPCQKSCPTHLDIKSF. Cys79, Cys82, Cys87, and Cys91 together coordinate [4Fe-4S] cluster. Val129 lines the FAD pocket. Cys130, Cys136, Cys140, and Gln156 together coordinate [4Fe-4S] cluster. FAD-binding positions include 194–198, 218–226, Arg235, and Leu261; these read GAGPA and EKQEYVGGL. NADP(+) is bound by residues 340–343, 364–365, and Arg371; these read AGDT and RK. Residue Lys384 is modified to N6-acetyllysine. NADP(+) is bound by residues 437-439 and 481-487; these read AFG and DIVGMAN. 480–489 contributes to the FAD binding site; the sequence is GDIVGMANTT. FMN-binding positions include Ser550 and 574–575; that span reads KT. Substrate is bound by residues Asn609 and 668–670; that span reads NLS. The Proton acceptor role is filled by Cys671. Lys709 contacts FMN. 736 to 737 contributes to the substrate binding site; it reads NT. FMN contacts are provided by residues Gly767, 793–795, and 816–817; these read TGG and CS. 2 4Fe-4S ferredoxin-type domains span residues 944-976 and 978-1007; these read VVAVIDEEMCINCGKCYMTCNDSGYQAIQFDPE and HLPTVTDTCTGCTLCLSVCPIIDCIRMVSR. Cys953, Cys956, Cys959, Cys963, Cys986, Cys989, Cys992, and Cys996 together coordinate [4Fe-4S] cluster.

The protein belongs to the dihydropyrimidine dehydrogenase family. In terms of assembly, homodimer. Requires FAD as cofactor. FMN is required as a cofactor. [4Fe-4S] cluster serves as cofactor.

The protein localises to the cytoplasm. The enzyme catalyses 5,6-dihydrouracil + NADP(+) = uracil + NADPH + H(+). It carries out the reaction 5,6-dihydrothymine + NADP(+) = thymine + NADPH + H(+). The protein operates within amino-acid biosynthesis; beta-alanine biosynthesis. With respect to regulation, inactivated by 5-iodouracil. Its function is as follows. Involved in pyrimidine base degradation. Catalyzes the reduction of uracil and thymine. The polypeptide is Dihydropyrimidine dehydrogenase [NADP(+)] (DPYD) (Sus scrofa (Pig)).